The chain runs to 159 residues: RNA pyrophosphohydrolase (159 aa).

The region spanning 6–149 (GFRPNVGIIL…KREVYRRALK (144 aa)) is the Nudix hydrolase domain. The Nudix box signature appears at 38-59 (GGINDRETPEEALYRELNEEVG).

This sequence belongs to the Nudix hydrolase family. RppH subfamily. The cofactor is a divalent metal cation.

Its function is as follows. Accelerates the degradation of transcripts by removing pyrophosphate from the 5'-end of triphosphorylated RNA, leading to a more labile monophosphorylated state that can stimulate subsequent ribonuclease cleavage. The protein is RNA pyrophosphohydrolase of Pseudomonas aeruginosa (strain LESB58).